The sequence spans 115 residues: Large ribosomal subunit protein bL21 (115 aa).

It belongs to the bacterial ribosomal protein bL21 family. In terms of assembly, part of the 50S ribosomal subunit. Contacts protein L20.

In terms of biological role, this protein binds to 23S rRNA in the presence of protein L20. The sequence is that of Large ribosomal subunit protein bL21 from Picosynechococcus sp. (strain ATCC 27264 / PCC 7002 / PR-6) (Agmenellum quadruplicatum).